Consider the following 286-residue polypeptide: Nucleotide-binding protein VC_2532 (286 aa).

8–15 (GQSGAGKS) serves as a coordination point for ATP. 56–59 (DIRN) contributes to the GTP binding site.

It belongs to the RapZ-like family.

Displays ATPase and GTPase activities. The sequence is that of Nucleotide-binding protein VC_2532 from Vibrio cholerae serotype O1 (strain ATCC 39315 / El Tor Inaba N16961).